The following is a 155-amino-acid chain: MIELGVSLCPFFLAALFEIRGGYLICLWLRNNMRAVFGPLGRLMLAVCGIIPTFQPSHFGRVYAAHGGIFIVFSLIWDLFVDKKIPDRYDHRGNNNVCGCFHYVLRLSLIGRYSVISFCNFQTPRQRISDFFLSRSIKHNFYLFFCNQTLGNYFV.

Transmembrane regions (helical) follow at residues 8–28 (LCPF…ICLW), 35–55 (AVFG…PTFQ), and 62–82 (VYAA…LFVD).

Belongs to the UPF0060 family.

It is found in the cell membrane. The chain is UPF0060 membrane protein MA_3936 from Methanosarcina acetivorans (strain ATCC 35395 / DSM 2834 / JCM 12185 / C2A).